The chain runs to 374 residues: 3-isopropylmalate dehydrogenase (374 aa).

Residue 83-96 (GPKWDNLPPEIRPE) coordinates NAD(+). The substrate site is built by arginine 104, arginine 114, arginine 142, and aspartate 231. Residues aspartate 231, aspartate 255, and aspartate 259 each coordinate Mg(2+). 288–300 (GSAPDIAGQNKAN) provides a ligand contact to NAD(+).

Belongs to the isocitrate and isopropylmalate dehydrogenases family. LeuB type 1 subfamily. Homodimer. Mg(2+) serves as cofactor. Requires Mn(2+) as cofactor.

It localises to the cytoplasm. It carries out the reaction (2R,3S)-3-isopropylmalate + NAD(+) = 4-methyl-2-oxopentanoate + CO2 + NADH. It participates in amino-acid biosynthesis; L-leucine biosynthesis; L-leucine from 3-methyl-2-oxobutanoate: step 3/4. In terms of biological role, catalyzes the oxidation of 3-carboxy-2-hydroxy-4-methylpentanoate (3-isopropylmalate) to 3-carboxy-4-methyl-2-oxopentanoate. The product decarboxylates to 4-methyl-2 oxopentanoate. This is 3-isopropylmalate dehydrogenase from Carboxydothermus hydrogenoformans (strain ATCC BAA-161 / DSM 6008 / Z-2901).